A 529-amino-acid polypeptide reads, in one-letter code: GMP synthase [glutamine-hydrolyzing] (529 aa).

The Glutamine amidotransferase type-1 domain maps to 16-205; sequence PVLVVDFGAQ…LHDFAGLDAD (190 aa). The active-site Nucleophile is the C93. Catalysis depends on residues H179 and E181. A GMPS ATP-PPase domain is found at 206–403; sequence WTAANIAGVL…LDLPEEIVAR (198 aa). 233–239 is a binding site for ATP; sequence SGGVDSA.

As to quaternary structure, homodimer.

It catalyses the reaction XMP + L-glutamine + ATP + H2O = GMP + L-glutamate + AMP + diphosphate + 2 H(+). The protein operates within purine metabolism; GMP biosynthesis; GMP from XMP (L-Gln route): step 1/1. Its function is as follows. Catalyzes the synthesis of GMP from XMP. In Mycobacterium leprae (strain Br4923), this protein is GMP synthase [glutamine-hydrolyzing].